The following is a 395-amino-acid chain: Small RNA 2'-O-methyltransferase (395 aa).

2 residues coordinate S-adenosyl-L-methionine: aspartate 79 and serine 115. Glutamate 133, glutamate 136, histidine 137, and histidine 182 together coordinate Mg(2+).

The protein belongs to the methyltransferase superfamily. HEN1 family. Mg(2+) is required as a cofactor. As to expression, specifically expressed in testis.

It is found in the cytoplasm. The enzyme catalyses small RNA 3'-end nucleotide + S-adenosyl-L-methionine = small RNA 3'-end 2'-O-methylnucleotide + S-adenosyl-L-homocysteine + H(+). Methyltransferase that adds a 2'-O-methyl group at the 3'-end of piRNAs, a class of 24 to 30 nucleotide RNAs that are generated by a Dicer-independent mechanism and are primarily derived from transposons and other repeated sequence elements. This probably protects the 3'-end of piRNAs from uridylation activity and subsequent degradation. Stabilization of piRNAs is essential for gametogenesis. In Mus musculus (Mouse), this protein is Small RNA 2'-O-methyltransferase (Henmt1).